We begin with the raw amino-acid sequence, 455 residues long: MPNPDTSTMTPREIVQELDRHIVGQHDAKRAVAIALRNRWRRMQLPEELRNEVMPKNILMIGPTGVGKTEIARRLATLANAPFVKVEATRFTEVGYVGKDVEQIIRDLADTSVKLYREQAKVRVRNQAEERAEDCILDALLPRRATGIGFDPEAARNEPSSQENDTRIKFRRMLRNGELDEREIELEVAVNASMDIMTPPGMEEMGQQLRQMFSNLGSGKSQKRKLTIKAARPLLIEEEAGKLVNEDDVRTAAIKACEQHGIVFIDEIDKVAKRGEAGSNGGDVSREGVQRDLLPLVEGSNVSTKYGTVKTDHILFIASGAFHLAKPSDLIPELQGRFPIRVELTALTKADFVRILTEPKAALIKQYEALLQTEGVSLTFAQDAVDRLAEIAAQVNERQENIGARRLHTVLERLLDVLSYEAPDRDGQSVTVDAAYVDAQLGELVQDPDLSRYIL.

ATP-binding positions include valine 23, 65 to 70 (GVGKTE), aspartate 266, glutamate 333, and arginine 405.

Belongs to the ClpX chaperone family. HslU subfamily. A double ring-shaped homohexamer of HslV is capped on each side by a ring-shaped HslU homohexamer. The assembly of the HslU/HslV complex is dependent on binding of ATP.

The protein resides in the cytoplasm. ATPase subunit of a proteasome-like degradation complex; this subunit has chaperone activity. The binding of ATP and its subsequent hydrolysis by HslU are essential for unfolding of protein substrates subsequently hydrolyzed by HslV. HslU recognizes the N-terminal part of its protein substrates and unfolds these before they are guided to HslV for hydrolysis. In Xanthomonas oryzae pv. oryzae (strain MAFF 311018), this protein is ATP-dependent protease ATPase subunit HslU.